Consider the following 184-residue polypeptide: PLASMODESMATA CALLOSE-BINDING PROTEIN 3 (184 aa).

The N-terminal stretch at 1–19 is a signal peptide; the sequence is MAVFVLVMILLAMAGHSSG. A disulfide bond links Cys-22 and Cys-84. The disordered stretch occupies residues 109 to 146; the sequence is SGSGTTTPVTTTPSTRVPTTTNTRPYTITPSTGGGLGI. The span at 113–139 shows a compositional bias: low complexity; it reads TTTPVTTTPSTRVPTTTNTRPYTITPS. Residue Ser-158 is the site of GPI-anchor amidated serine attachment. A propeptide spans 159-184 (removed in mature form); that stretch reads FGFKLQSPRFGFIVLFTLFLPFYLFS.

In terms of processing, contains two additional disulfide bonds. Expressed in the shoot apical region and in young leaves but also detected in the laminar and vasculature of mature leaves.

The protein resides in the cell membrane. It is found in the cell junction. Its subcellular location is the plasmodesma. This is PLASMODESMATA CALLOSE-BINDING PROTEIN 3 (PDCB3) from Arabidopsis thaliana (Mouse-ear cress).